The primary structure comprises 403 residues: Phosphopentomutase (403 aa).

Residues Asp13, Asp298, His303, Asp339, His340, and His351 each coordinate Mn(2+).

The protein belongs to the phosphopentomutase family. It depends on Mn(2+) as a cofactor.

The protein resides in the cytoplasm. The catalysed reaction is 2-deoxy-alpha-D-ribose 1-phosphate = 2-deoxy-D-ribose 5-phosphate. It carries out the reaction alpha-D-ribose 1-phosphate = D-ribose 5-phosphate. The protein operates within carbohydrate degradation; 2-deoxy-D-ribose 1-phosphate degradation; D-glyceraldehyde 3-phosphate and acetaldehyde from 2-deoxy-alpha-D-ribose 1-phosphate: step 1/2. In terms of biological role, isomerase that catalyzes the conversion of deoxy-ribose 1-phosphate (dRib-1-P) and ribose 1-phosphate (Rib-1-P) to deoxy-ribose 5-phosphate (dRib-5-P) and ribose 5-phosphate (Rib-5-P), respectively. In Streptococcus thermophilus (strain ATCC BAA-250 / LMG 18311), this protein is Phosphopentomutase.